The primary structure comprises 235 residues: MKAYPFTSTTATTMRQNCGGSLMFNMYLSDPTENLLKESKSPSWTPINTGVQKGSGQIQLWQFLLELLSDSANMTCIAWEGTNGEFKLIDPDEVARRWGERKSKPNMNYDKLSRALRYYYDKNIMTKVHGKRYAYKFDFNGLAQVCQPSSTEQAIYKFQSNFAPIQFSGISKLNLVAPGVGPSGFSYWPGSPPTLYHSHNLQPPGPFGAVSASHLSCVNNINSLNNLNNINNHYN.

Positions Ile58–Asp138 form a DNA-binding region, ETS.

It belongs to the ETS family. Expressed by serotonergic neurons in anterior and posterior raphe.

It is found in the nucleus. Functionally, functions as a transcriptional regulator. Functions in the differentiation and the maintenance of the central serotonergic neurons. May play a role in cell growth. The sequence is that of Protein FEV (fev) from Danio rerio (Zebrafish).